The sequence spans 291 residues: Shikimate dehydrogenase (NADP(+)) (291 aa).

Shikimate-binding positions include 23 to 25 and threonine 70; that span reads SFS. The active-site Proton acceptor is lysine 74. The shikimate site is built by asparagine 95 and aspartate 110. Residues 135–139 and leucine 232 contribute to the NADP(+) site; that span reads GAGGA. Tyrosine 234 contributes to the shikimate binding site. Glycine 255 provides a ligand contact to NADP(+).

This sequence belongs to the shikimate dehydrogenase family. As to quaternary structure, homodimer.

The enzyme catalyses shikimate + NADP(+) = 3-dehydroshikimate + NADPH + H(+). Its pathway is metabolic intermediate biosynthesis; chorismate biosynthesis; chorismate from D-erythrose 4-phosphate and phosphoenolpyruvate: step 4/7. Functionally, involved in the biosynthesis of the chorismate, which leads to the biosynthesis of aromatic amino acids. Catalyzes the reversible NADPH linked reduction of 3-dehydroshikimate (DHSA) to yield shikimate (SA). The chain is Shikimate dehydrogenase (NADP(+)) from Desulforamulus reducens (strain ATCC BAA-1160 / DSM 100696 / MI-1) (Desulfotomaculum reducens).